A 437-amino-acid chain; its full sequence is ATP-dependent RNA helicase RhlB (437 aa).

Residues 9–37 carry the Q motif motif; sequence QKFADLGLKPQVTEGLEKKGFEYCTPIQA. The Helicase ATP-binding domain occupies 40 to 219; the sequence is LPVLLTGQDI…FEHMHNPEHV (180 aa). An ATP-binding site is contributed by 53–60; sequence AQTGTGKT. The DEAD box signature appears at 165–168; sequence DEAD. The Helicase C-terminal domain occupies 245-390; sequence ALLQTLIEEE…VSDYDASALI (146 aa). The interval 395–437 is disordered; the sequence is APLRMRAPRTQQRRTNTGGTRSGNRKPQGRRPRQPRQSAPKQS. Positions 403–413 are enriched in low complexity; that stretch reads RTQQRRTNTGG. Over residues 417 to 428 the composition is skewed to basic residues; the sequence is GNRKPQGRRPRQ.

This sequence belongs to the DEAD box helicase family. RhlB subfamily. In terms of assembly, component of the RNA degradosome, which is a multiprotein complex involved in RNA processing and mRNA degradation.

The protein resides in the cytoplasm. It carries out the reaction ATP + H2O = ADP + phosphate + H(+). Functionally, DEAD-box RNA helicase involved in RNA degradation. Has RNA-dependent ATPase activity and unwinds double-stranded RNA. This is ATP-dependent RNA helicase RhlB from Vibrio campbellii (strain ATCC BAA-1116).